A 744-amino-acid polypeptide reads, in one-letter code: NAD(P)H-quinone oxidoreductase subunit 5, chloroplastic (744 aa).

The next 16 membrane-spanning stretches (helical) occupy residues 9 to 29 (WIIP…LLFF), 40 to 60 (WVFP…DLSI), 89 to 109 (IDSL…LVLI), 125 to 145 (FTYL…SNLI), 147 to 167 (VYIF…FWFT), 185 to 205 (GDFG…SLEF), 219 to 239 (NEVN…GSVA), 258 to 278 (TPIS…FLVA), 280 to 300 (LLPL…IGII), 327 to 347 (LGYM…FHLI), 354 to 374 (ALLF…VGYS), 396 to 416 (NAFL…CFWS), 425 to 445 (WLYS…TAFY), 552 to 572 (LFSM…GISF), 612 to 632 (FSVS…KPVF), and 724 to 744 (ISSY…SIFI).

This sequence belongs to the complex I subunit 5 family. As to quaternary structure, NDH is composed of at least 16 different subunits, 5 of which are encoded in the nucleus.

The protein localises to the plastid. Its subcellular location is the chloroplast thylakoid membrane. The enzyme catalyses a plastoquinone + NADH + (n+1) H(+)(in) = a plastoquinol + NAD(+) + n H(+)(out). It carries out the reaction a plastoquinone + NADPH + (n+1) H(+)(in) = a plastoquinol + NADP(+) + n H(+)(out). Functionally, NDH shuttles electrons from NAD(P)H:plastoquinone, via FMN and iron-sulfur (Fe-S) centers, to quinones in the photosynthetic chain and possibly in a chloroplast respiratory chain. The immediate electron acceptor for the enzyme in this species is believed to be plastoquinone. Couples the redox reaction to proton translocation, and thus conserves the redox energy in a proton gradient. The protein is NAD(P)H-quinone oxidoreductase subunit 5, chloroplastic (ndhF) of Cicer arietinum (Chickpea).